The following is a 417-amino-acid chain: Histidine--tRNA ligase (417 aa).

The protein belongs to the class-II aminoacyl-tRNA synthetase family. In terms of assembly, homodimer.

It is found in the cytoplasm. It carries out the reaction tRNA(His) + L-histidine + ATP = L-histidyl-tRNA(His) + AMP + diphosphate + H(+). In Caldanaerobacter subterraneus subsp. tengcongensis (strain DSM 15242 / JCM 11007 / NBRC 100824 / MB4) (Thermoanaerobacter tengcongensis), this protein is Histidine--tRNA ligase.